The following is a 223-amino-acid chain: Twisted gastrulation protein homolog 1 (223 aa).

Residues 1–25 form the signal peptide; the sequence is MKLHYVAVLTLAILMFLTWLPESLS. Asparagine 52 and asparagine 81 each carry an N-linked (GlcNAc...) asparagine glycan.

This sequence belongs to the twisted gastrulation protein family. As to quaternary structure, interacts with CHRD and BMP4. This interaction enhances CHRD/BMP4 complex formation. Interacts with BMP7.

It is found in the secreted. May be involved in dorsoventral axis formation. Seems to antagonize BMP signaling by forming ternary complexes with CHRD and BMPs, thereby preventing BMPs from binding to their receptors. In addition to the anti-BMP function, also has pro-BMP activity, partly mediated by cleavage and degradation of CHRD, which releases BMPs from ternary complexes. May be an important modulator of BMP-regulated cartilage development and chondrocyte differentiation. May play a role in thymocyte development. This is Twisted gastrulation protein homolog 1 (TWSG1) from Homo sapiens (Human).